The sequence spans 301 residues: Phosphatidylglycerol--prolipoprotein diacylglyceryl transferase (301 aa).

3 helical membrane passes run 17–37 (LAVR…IVVG), 59–79 (MLFY…VLFY), and 97–117 (GGMS…LFAY). Arginine 142 is a binding site for a 1,2-diacyl-sn-glycero-3-phospho-(1'-sn-glycerol). 2 helical membrane passes run 230–250 (MGAI…TVEF) and 265–285 (LSMG…LLVW).

Belongs to the Lgt family.

It localises to the cell inner membrane. It catalyses the reaction L-cysteinyl-[prolipoprotein] + a 1,2-diacyl-sn-glycero-3-phospho-(1'-sn-glycerol) = an S-1,2-diacyl-sn-glyceryl-L-cysteinyl-[prolipoprotein] + sn-glycerol 1-phosphate + H(+). Its pathway is protein modification; lipoprotein biosynthesis (diacylglyceryl transfer). Functionally, catalyzes the transfer of the diacylglyceryl group from phosphatidylglycerol to the sulfhydryl group of the N-terminal cysteine of a prolipoprotein, the first step in the formation of mature lipoproteins. This chain is Phosphatidylglycerol--prolipoprotein diacylglyceryl transferase, found in Paraburkholderia xenovorans (strain LB400).